The chain runs to 203 residues: Small ribosomal subunit protein uS10m (203 aa).

The N-terminal 14 residues, 1–14 (MLRNTIALRSFIRT), are a transit peptide targeting the mitochondrion. S193 is subject to Phosphoserine.

It belongs to the universal ribosomal protein uS10 family. Component of the mitochondrial small ribosomal subunit (mt-SSU). Mature yeast 74S mitochondrial ribosomes consist of a small (37S) and a large (54S) subunit. The 37S small subunit contains a 15S ribosomal RNA (15S mt-rRNA) and 34 different proteins. The 54S large subunit contains a 21S rRNA (21S mt-rRNA) and 46 different proteins.

Its subcellular location is the mitochondrion. Component of the mitochondrial ribosome (mitoribosome), a dedicated translation machinery responsible for the synthesis of mitochondrial genome-encoded proteins, including at least some of the essential transmembrane subunits of the mitochondrial respiratory chain. The mitoribosomes are attached to the mitochondrial inner membrane and translation products are cotranslationally integrated into the membrane. This Saccharomyces cerevisiae (strain ATCC 204508 / S288c) (Baker's yeast) protein is Small ribosomal subunit protein uS10m (RSM10).